A 533-amino-acid chain; its full sequence is Cytochrome P450 monooxygenase ltmK (533 aa).

A helical membrane pass occupies residues 27 to 47; that stretch reads VHWLQVIVALLVLIVCIFLYW. The N-linked (GlcNAc...) asparagine glycan is linked to asparagine 116. Heme is bound at residue cysteine 473. A glycan (N-linked (GlcNAc...) asparagine) is linked at asparagine 528.

It belongs to the cytochrome P450 family. Requires heme as cofactor.

It is found in the membrane. The protein operates within secondary metabolite biosynthesis. Cytochrome P450 monooxygenase; part of the gene clusters that mediates the biosynthesis of lolitrems, indole-diterpene mycotoxins that are potent tremorgens in mammals, and are synthesized by clavicipitaceous fungal endophytes in association with their grass hosts. The geranylgeranyl diphosphate (GGPP) synthase ltmG is proposed to catalyze the first step in lolitrem biosynthesis. LtmG catalyzes a series of iterative condensations of isopentenyl diphosphate (IPP) with dimethylallyl diphosphate (DMAPP), geranyl diphosphate (GPP), and farnesyl diphosphate (FPP), to form GGPP. GGPP then condenses with indole-3-glycerol phosphate to form 3-geranylgeranylindole, an acyclic intermediate, to be incorporated into paxilline. Either ltmG or ltmC could be responsible for this step, as both are putative prenyl transferases. The FAD-dependent monooxygenase ltmM then catalyzes the epoxidation of the two terminal alkenes of the geranylgeranyl moiety, which is subsequently cyclized by ltmB, to paspaline. The cytochrome P450 monooxygenases ltmQ and ltmP can sequentially oxidize paspaline to terpendole E and terpendole F. Alternatively, ltmP converts paspaline to an intermediate which is oxidized by ltmQ to terpendole F. LtmF, ltmK, ltmE and ltmJ appear to be unique to the epichloe endophytes. The prenyltransferase ltmF is involved in the 27-hydroxyl-O-prenylation. The cytochrome P450 monooxygenase ltmK is required for the oxidative acetal ring formation. The multi-functional prenyltransferase ltmE is required for C20- and C21-prenylations of the indole ring of paspalanes and acts together with the cytochrome P450 monooxygenase ltmJ to yield lolitremanes by multiple oxidations and ring closures. The stereoisomer pairs of lolitriol and lolitrem N or lolitrem B and lolitrem F may be attributed to variations in the way in which ring closure can occur under the action of ltmJ. While the major product of this pathway is lolitrem B, the prenyl transferases and cytochrome P450 monooxygenases identified in this pathway have a remarkable versatility in their regio- and stereo-specificities to generate a diverse range of metabolites that are products of a metabolic grid rather than a linear pathway. This Epichloe festucae var. lolii (Neotyphodium lolii) protein is Cytochrome P450 monooxygenase ltmK.